The following is a 282-amino-acid chain: Protein MGF 505-3R (282 aa).

Belongs to the asfivirus MGF 505 family.

Its function is as follows. Plays a role in virus cell tropism, and may be required for efficient virus replication in macrophages. This is Protein MGF 505-3R from Ornithodoros (relapsing fever ticks).